The sequence spans 117 residues: Large ribosomal subunit protein uL18 (117 aa).

It belongs to the universal ribosomal protein uL18 family. Part of the 50S ribosomal subunit; part of the 5S rRNA/L5/L18/L25 subcomplex. Contacts the 5S and 23S rRNAs.

In terms of biological role, this is one of the proteins that bind and probably mediate the attachment of the 5S RNA into the large ribosomal subunit, where it forms part of the central protuberance. This is Large ribosomal subunit protein uL18 from Photobacterium profundum (strain SS9).